The primary structure comprises 889 residues: Chitin synthase I (889 aa).

An N-linked (GlcNAc...) asparagine glycan is attached at Asn-43. Residues 94–138 (GEYFDGYNQGHPPQEHQAYDDDGQPLIEDQHGYSDNPQHQTQTPA) are disordered. Polar residues predominate over residues 126-137 (YSDNPQHQTQTP). Asn-199 carries an N-linked (GlcNAc...) asparagine glycan. 9 helical membrane-spanning segments follow: residues 431-451 (SAFG…YVAL), 530-550 (RWLN…YEFF), 560-580 (LAFF…WFAI), 606-626 (ILGV…FVLS), 641-661 (MVWF…FIAV), 687-707 (TLII…IIMF), 716-736 (FIQY…YAFC), 815-835 (GVVL…LSSA), and 861-881 (IVLW…MWFL).

It belongs to the chitin synthase family. Class I subfamily. Expressed in hyphal bodies.

It is found in the cell membrane. The enzyme catalyses [(1-&gt;4)-N-acetyl-beta-D-glucosaminyl](n) + UDP-N-acetyl-alpha-D-glucosamine = [(1-&gt;4)-N-acetyl-beta-D-glucosaminyl](n+1) + UDP + H(+). Polymerizes chitin, a structural polymer of the cell wall and septum, by transferring the sugar moiety of UDP-GlcNAc to the non-reducing end of the growing chitin polymer. Contributes to the production of conidia and the ability of fungal conidia to germinate. Not involved in fungal stress tolerances. This chain is Chitin synthase I, found in Metarhizium acridum (strain CQMa 102).